The sequence spans 87 residues: UPF0250 protein NT01EI_2946 (87 aa).

The protein belongs to the UPF0250 family.

The chain is UPF0250 protein NT01EI_2946 from Edwardsiella ictaluri (strain 93-146).